The following is a 305-amino-acid chain: Ribosomal RNA small subunit methyltransferase H (305 aa).

S-adenosyl-L-methionine contacts are provided by residues 33 to 35, Asp51, Phe78, Asp96, and Gln103; that span reads GGY.

Belongs to the methyltransferase superfamily. RsmH family.

The protein localises to the cytoplasm. It catalyses the reaction cytidine(1402) in 16S rRNA + S-adenosyl-L-methionine = N(4)-methylcytidine(1402) in 16S rRNA + S-adenosyl-L-homocysteine + H(+). In terms of biological role, specifically methylates the N4 position of cytidine in position 1402 (C1402) of 16S rRNA. This is Ribosomal RNA small subunit methyltransferase H from Rickettsia bellii (strain RML369-C).